Consider the following 311-residue polypeptide: MIHSRLIIIGSGPSGYTAAIYASRALLHPLLFEGFFSGISGGQLMTTTEVENFPGFPEGILGPKLMNNMKEQAVRFGTKTLAQDIISVDFSVRPFILKSKEETYSCDACIIATGASAKRLEIPGAGNDEFWQKGVTACAVCDGASPIFKNKDLYVIGGGDSALEEALYLTRYGSHVYVVHRRDKLRASKAMEARAQNNEKITFLWNSEIVKISGDSIVRSVDIKNVQTQEITTREAAGVFFAIGHKPNTDFLGGQLTLDESGYIVTEKGTSKTSVPGVFAAGDVQDKYYRQAVTSAGSGCIAALDAERFLG.

33–43 (EGFFSGISGGQ) contacts FAD. The cysteines at positions 138 and 141 are disulfide-linked. Residue 283-292 (DVQDKYYRQA) coordinates FAD.

The protein belongs to the class-II pyridine nucleotide-disulfide oxidoreductase family. In terms of assembly, homodimer. FAD is required as a cofactor.

Its subcellular location is the cytoplasm. It catalyses the reaction [thioredoxin]-dithiol + NADP(+) = [thioredoxin]-disulfide + NADPH + H(+). The sequence is that of Thioredoxin reductase (trxB) from Chlamydia pneumoniae (Chlamydophila pneumoniae).